The chain runs to 558 residues: Formate--tetrahydrofolate ligase (558 aa).

Residue 66–73 (TPAGEGKT) participates in ATP binding.

Belongs to the formate--tetrahydrofolate ligase family.

The enzyme catalyses (6S)-5,6,7,8-tetrahydrofolate + formate + ATP = (6R)-10-formyltetrahydrofolate + ADP + phosphate. The protein operates within one-carbon metabolism; tetrahydrofolate interconversion. The protein is Formate--tetrahydrofolate ligase of Neisseria gonorrhoeae (strain ATCC 700825 / FA 1090).